The chain runs to 202 residues: FMN-dependent NADH:quinone oxidoreductase (202 aa).

FMN-binding positions include Ser9, 15-17 (SVS), 95-98 (MYNF), and 139-142 (SRGG).

Belongs to the azoreductase type 1 family. In terms of assembly, homodimer. It depends on FMN as a cofactor.

It carries out the reaction 2 a quinone + NADH + H(+) = 2 a 1,4-benzosemiquinone + NAD(+). The enzyme catalyses N,N-dimethyl-1,4-phenylenediamine + anthranilate + 2 NAD(+) = 2-(4-dimethylaminophenyl)diazenylbenzoate + 2 NADH + 2 H(+). Functionally, quinone reductase that provides resistance to thiol-specific stress caused by electrophilic quinones. Also exhibits azoreductase activity. Catalyzes the reductive cleavage of the azo bond in aromatic azo compounds to the corresponding amines. In Laribacter hongkongensis (strain HLHK9), this protein is FMN-dependent NADH:quinone oxidoreductase.